A 571-amino-acid chain; its full sequence is E3 ubiquitin-protein ligase RNF168 (571 aa).

The RING-type zinc-finger motif lies at 16–55 (CGICMEILVEPVTLPCNHTLCKPCFQSTVEKASLCCPFCR). S70 bears the Phosphoserine mark. Residues 110-128 (LSKPGELRREYEEEISKVA) carry the LR motif 1 motif. S134 bears the Phosphoserine mark. Positions 143–151 (EEYIQRLLA) match the UMI motif motif. Disordered regions lie at residues 151–174 (AEEE…QLKS) and 191–292 (EGSI…GADS). The MIU motif 1 signature appears at 168 to 191 (MEEQLKSDEELARKLSIDINNFCE). S197 is subject to Phosphoserine. Basic and acidic residues predominate over residues 202–214 (RKSDPVTPKSEKK). A Glycyl lysine isopeptide (Lys-Gly) (interchain with G-Cter in SUMO2) cross-link involves residue K210. The span at 231-242 (PKSQFGSASHSE) shows a compositional bias: polar residues. Basic and acidic residues predominate over residues 243-263 (AVQEVRKDSVSKDIDSSDRKS). Phosphothreonine is present on T362. Disordered stretches follow at residues 390–422 (NQES…EETE) and 459–560 (KEQM…ISQK). A phosphoserine mark is found at S411, S414, and S415. The MIU motif 2 signature appears at 439-462 (RHKQEEQDRLLALQLQKEVDKEQM). The short motif at 466–477 (RQKGSPDEYHLR) is the LR motif 2 element. At S470 the chain carries Phosphoserine. Residues 508–519 (PTPERGSRDKNR) show a composition bias toward basic and acidic residues. Polar residues-rich tracts occupy residues 520-530 (QVSLKMQLKQS) and 549-560 (SAHSLQPSISQK). K528 is covalently cross-linked (Glycyl lysine isopeptide (Lys-Gly) (interchain with G-Cter in SUMO2)).

The protein belongs to the RNF168 family. In terms of assembly, monomer. Interacts with UBE2N/UBC13. Sumoylated with SUMO1 by PIAS4 in response to double-strand breaks (DSBs). Post-translationally, ubiquitinated.

It is found in the nucleus. The enzyme catalyses S-ubiquitinyl-[E2 ubiquitin-conjugating enzyme]-L-cysteine + [acceptor protein]-L-lysine = [E2 ubiquitin-conjugating enzyme]-L-cysteine + N(6)-ubiquitinyl-[acceptor protein]-L-lysine.. It participates in protein modification; protein ubiquitination. E3 ubiquitin-protein ligase required for accumulation of repair proteins to sites of DNA damage. Acts with UBE2N/UBC13 to amplify the RNF8-dependent histone ubiquitination. Recruited to sites of DNA damage at double-strand breaks (DSBs) by binding to ubiquitinated histone H2A and H2AX and amplifies the RNF8-dependent H2A ubiquitination, promoting the formation of 'Lys-63'-linked ubiquitin conjugates. This leads to concentrate ubiquitinated histones H2A and H2AX at DNA lesions to the threshold required for recruitment of TP53BP1 and BRCA1. Also recruited at DNA interstrand cross-links (ICLs) sites and promotes accumulation of 'Lys-63'-linked ubiquitination of histones H2A and H2AX, leading to recruitment of FAAP20/C1orf86 and Fanconi anemia (FA) complex, followed by interstrand cross-link repair. H2A ubiquitination also mediates the ATM-dependent transcriptional silencing at regions flanking DSBs in cis, a mechanism to avoid collision between transcription and repair intermediates. Also involved in class switch recombination in immune system, via its role in regulation of DSBs repair. Following DNA damage, promotes the ubiquitination and degradation of JMJD2A/KDM4A in collaboration with RNF8, leading to unmask H4K20me2 mark and promote the recruitment of TP53BP1 at DNA damage sites. Not able to initiate 'Lys-63'-linked ubiquitination in vitro; possibly due to partial occlusion of the UBE2N/UBC13-binding region. Catalyzes monoubiquitination of 'Lys-13' and 'Lys-15' of nucleosomal histone H2A (H2AK13Ub and H2AK15Ub, respectively). This chain is E3 ubiquitin-protein ligase RNF168, found in Homo sapiens (Human).